A 211-amino-acid chain; its full sequence is uncharacterized protein (211 aa).

The Zn(2+) site is built by histidine 54, histidine 56, aspartate 58, histidine 59, histidine 129, aspartate 148, and histidine 189.

Belongs to the metallo-beta-lactamase superfamily. Glyoxalase II family. Zn(2+) serves as cofactor.

This is an uncharacterized protein from Aquifex aeolicus (strain VF5).